The primary structure comprises 159 residues: Ribonuclease H (159 aa).

Positions 10-153 (TQTQVVIYTD…ADALANQGVE (144 aa)) constitute an RNase H type-1 domain. 4 residues coordinate Mg(2+): D19, E57, D79, and D145.

The protein belongs to the RNase H family. As to quaternary structure, monomer. It depends on Mg(2+) as a cofactor.

It localises to the cytoplasm. The catalysed reaction is Endonucleolytic cleavage to 5'-phosphomonoester.. Endonuclease that specifically degrades the RNA of RNA-DNA hybrids. In Polaromonas sp. (strain JS666 / ATCC BAA-500), this protein is Ribonuclease H.